The primary structure comprises 441 residues: Protein translocase subunit SecY (441 aa).

Helical transmembrane passes span 25 to 45, 78 to 98, 126 to 146, 155 to 175, 184 to 204, 218 to 238, 275 to 295, 318 to 338, 376 to 396, and 398 to 418; these read YFVI…IPGI, IFAL…ILTL, LILA…IPGL, ISFY…LMWL, IGNG…PSSF, VLLF…VVYI, VIPA…ASWF, YILT…GLAF, FLGS…RFFM, and VPFY…IDFI.

It belongs to the SecY/SEC61-alpha family. In terms of assembly, component of the Sec protein translocase complex. Heterotrimer consisting of SecY, SecE and SecG subunits. The heterotrimers can form oligomers, although 1 heterotrimer is thought to be able to translocate proteins. Interacts with the ribosome. Interacts with SecDF, and other proteins may be involved. Interacts with SecA.

The protein resides in the cell membrane. In terms of biological role, the central subunit of the protein translocation channel SecYEG. Consists of two halves formed by TMs 1-5 and 6-10. These two domains form a lateral gate at the front which open onto the bilayer between TMs 2 and 7, and are clamped together by SecE at the back. The channel is closed by both a pore ring composed of hydrophobic SecY resides and a short helix (helix 2A) on the extracellular side of the membrane which forms a plug. The plug probably moves laterally to allow the channel to open. The ring and the pore may move independently. The polypeptide is Protein translocase subunit SecY (Buchnera aphidicola subsp. Baizongia pistaciae (strain Bp)).